Consider the following 255-residue polypeptide: High-affinity branched-chain amino acid transport ATP-binding protein BraF (255 aa).

An ABC transporter domain is found at L6 to E254. An ATP-binding site is contributed by G38–T45.

Belongs to the ABC transporter superfamily.

It localises to the cell inner membrane. Functionally, component of the high affinity leucine, isoleucine, valine, transport system (LIV-I), which is operative without Na(+) and is specific for alanine and threonine, in addition to branched-chain amino acids. The protein is High-affinity branched-chain amino acid transport ATP-binding protein BraF (braF) of Pseudomonas aeruginosa (strain ATCC 15692 / DSM 22644 / CIP 104116 / JCM 14847 / LMG 12228 / 1C / PRS 101 / PAO1).